We begin with the raw amino-acid sequence, 266 residues long: Putative carbamate hydrolase RutD (266 aa).

Belongs to the AB hydrolase superfamily. Hydrolase RutD family.

It carries out the reaction carbamate + 2 H(+) = NH4(+) + CO2. Involved in pyrimidine catabolism. May facilitate the hydrolysis of carbamate, a reaction that can also occur spontaneously. The sequence is that of Putative carbamate hydrolase RutD from Escherichia coli O157:H7.